The primary structure comprises 75 residues: Large ribosomal subunit protein bL31 (75 aa).

This sequence belongs to the bacterial ribosomal protein bL31 family. Type A subfamily. Part of the 50S ribosomal subunit.

In terms of biological role, binds the 23S rRNA. In Chlorobium phaeobacteroides (strain BS1), this protein is Large ribosomal subunit protein bL31.